The following is a 185-amino-acid chain: Elongation factor P (185 aa).

It belongs to the elongation factor P family.

Its subcellular location is the cytoplasm. Its pathway is protein biosynthesis; polypeptide chain elongation. Its function is as follows. Involved in peptide bond synthesis. Stimulates efficient translation and peptide-bond synthesis on native or reconstituted 70S ribosomes in vitro. Probably functions indirectly by altering the affinity of the ribosome for aminoacyl-tRNA, thus increasing their reactivity as acceptors for peptidyl transferase. This is Elongation factor P from Oceanobacillus iheyensis (strain DSM 14371 / CIP 107618 / JCM 11309 / KCTC 3954 / HTE831).